The primary structure comprises 530 residues: Equilibrative nucleoside transporter 4 (530 aa).

The interval 1–21 (MGSVGSQRLEEPSVAGTPDPG) is disordered. At 1–68 (MGSVGSQRLE…DEPVPDDRYH (68 aa)) the chain is on the extracellular side. A helical transmembrane segment spans residues 69–89 (AIYFAMLLAGVGFLLPYNSFI). Residues 90–101 (TDVDYLHHKYPG) are Cytoplasmic-facing. A helical transmembrane segment spans residues 102–122 (TSIVFDMSLTYILVALAAVLL). Over 123–139 (NNVLVERLTLHTRITAG) the chain is Extracellular. A helical transmembrane segment spans residues 140-160 (YLLALGPLLFISICDVWLQLF). The Cytoplasmic segment spans residues 161-166 (SRDQAY). A helical membrane pass occupies residues 167–187 (AINLAAVGTVAFGCTVQQSSF). Over 188–231 (YGYTGMLPKRYTQGVMTGESTAGVMISLSRILTKLLLPDERAST) the chain is Extracellular. The chain crosses the membrane as a helical span at residues 232–252 (LIFFLVSVALELLCFLLHLLV). At 253–351 (RRSRFVLFYT…LLLHRYVVAR (99 aa)) the chain is on the cytoplasmic side. The chain crosses the membrane as a helical span at residues 352-372 (VIWADMLSIAVTYFITLCLFP). Over 373–381 (GLESEIRHC) the chain is Extracellular. Residues 382 to 402 (ILGEWLPILIMAVFNLSDFVG) traverse the membrane as a helical segment. At 403 to 416 (KILAALPVDWRGTH) the chain is on the cytoplasmic side. A helical transmembrane segment spans residues 417–437 (LLACSCLRVVFIPLFILCVYP). Residues 438-450 (SGMPALRHPAWPC) lie on the Extracellular side of the membrane. A helical membrane pass occupies residues 451–471 (IFSLLMGISNGYFGSVPMILA). The Cytoplasmic portion of the chain corresponds to 472–486 (AGKVSPKQRELAGNT). The chain crosses the membrane as a helical span at residues 487-509 (MTVSYMSGLTLGSAVAYCTYSLT). The Extracellular segment spans residues 510–530 (RDAHGSCLHASTANGSILAGL). A glycan (N-linked (GlcNAc...) asparagine) is linked at asparagine 523.

It belongs to the SLC29A/ENT transporter (TC 2.A.57) family. N-glycosylated. In terms of tissue distribution, mainly expressed in brain and skeletal muscle. In brain, expressed in cerebellum, cerebral cortex, medulla oblongata, occipital pole, frontal and temporal lobes putamen, spinal cord, substancia nigra, hippocampus, caudate nucleus, nucleus accumbens, pons and choroid plexus. Expressed in heart, in both cardiomyocytes and vascular endothelial cells. Also expressed in adrenal gland, small intestine, pancreas, kidney, liver, bone marrow, lymph node. Located in endometrial stroma, where the expression is high in the proliferative phase, decreases during the secretory phase, and is no longer detectable in the menstrual phase.

The protein localises to the cell membrane. It localises to the apical cell membrane. The catalysed reaction is serotonin(out) = serotonin(in). It catalyses the reaction dopamine(out) = dopamine(in). The enzyme catalyses (R)-noradrenaline(out) = (R)-noradrenaline(in). It carries out the reaction (R)-adrenaline(out) = (R)-adrenaline(in). The catalysed reaction is histamine(out) = histamine(in). It catalyses the reaction tyramine(in) = tyramine(out). The enzyme catalyses guanidine(out) = guanidine(in). It carries out the reaction adenosine(in) = adenosine(out). With respect to regulation, activated at acidic pH. Its function is as follows. Electrogenic voltage-dependent transporter that mediates the transport of a variety of endogenous bioactive amines, cationic xenobiotics and drugs. Utilizes the physiologic inside-negative membrane potential as a driving force to facilitate cellular uptake of organic cations. Functions as a Na(+)- and Cl(-)-independent bidirectional transporter. Substrate transport is pH-dependent and enhanced under acidic condition, which is most likely the result of allosteric changes in the transporter structure. Implicated in monoamine neurotransmitters uptake such as serotonin, dopamine, adrenaline/epinephrine, noradrenaline/norepinephrine, histamine and tyramine, thereby supporting a role in homeostatic regulation of aminergic neurotransmission in the central nervous system. Also responsible for the uptake of bioactive amines and drugs through the blood-cerebrospinal fluid (CSF) barrier, from the CSF into choroid plexus epithelial cells, thereby playing a significant role in the clearance of cationic neurotoxins, xenobiotics and metabolic waste in the brain. Involved in bidirectional transport of the purine nucleoside adenosine and plays a role in the regulation of extracellular adenosine concentrations in cardiac tissues, in particular during ischemia. May be involved in organic cation uptake from the tubular lumen into renal tubular cells, thereby contributing to organic cation reabsorption in the kidney. Also transports guanidine. This Homo sapiens (Human) protein is Equilibrative nucleoside transporter 4.